A 255-amino-acid polypeptide reads, in one-letter code: Ribosome maturation factor RimP (255 aa).

The tract at residues 177 to 255 is disordered; sequence LRRGSAPPQD…ARLKNRDTLH (79 aa). The segment covering 186-202 has biased composition (acidic residues); sequence DGEDVDEEAGEAPEDEV. A compositionally biased stretch (basic and acidic residues) spans 216-230; it reads PKMDKKSDKKSDKPV.

This sequence belongs to the RimP family.

The protein resides in the cytoplasm. Functionally, required for maturation of 30S ribosomal subunits. This chain is Ribosome maturation factor RimP, found in Methylorubrum populi (strain ATCC BAA-705 / NCIMB 13946 / BJ001) (Methylobacterium populi).